The sequence spans 552 residues: Putative transport protein HAPS_0158 (552 aa).

5 helical membrane passes run 4 to 24 (IALTVSLLSLVAVIGLWIGHI), 28 to 48 (GVSLGIGGVLFGGILVSHFMT), 65 to 85 (FGLILFVYTIGIQVGPGFFAS), 95 to 115 (AFAVMIVGISGILVILLHKIF), and 157 to 177 (MGYAIAYPFGIIGILLAMWLI). 2 RCK C-terminal domains span residues 193–275 (DSAT…ILGE) and 277–360 (VNVS…IIGN). 6 consecutive transmembrane segments (helical) span residues 370-390 (MLPIFIGVGLGVLLGSIPIYL), 393-413 (FPVALKLGLAGGPLVVALILA), 438-458 (IVLFLAVVGWKAGGNFLNTLL), 463-483 (LAWIGYGAIITFVPLIVTGLV), 492-512 (YLSLCGLLAGSMTDPPALAFA), and 532-552 (LVMFCRIILPQILAILLWVAG).

Belongs to the AAE transporter (TC 2.A.81) family. YidE subfamily.

It is found in the cell membrane. This Glaesserella parasuis serovar 5 (strain SH0165) (Haemophilus parasuis) protein is Putative transport protein HAPS_0158.